The primary structure comprises 207 residues: Uracil phosphoribosyltransferase (207 aa).

5-phospho-alpha-D-ribose 1-diphosphate-binding positions include Arg77, Arg102, and 129 to 137 (DPMLATGGS). Residues Ile192 and 197-199 (GDA) each bind uracil. Asp198 provides a ligand contact to 5-phospho-alpha-D-ribose 1-diphosphate.

The protein belongs to the UPRTase family. It depends on Mg(2+) as a cofactor.

The enzyme catalyses UMP + diphosphate = 5-phospho-alpha-D-ribose 1-diphosphate + uracil. Its pathway is pyrimidine metabolism; UMP biosynthesis via salvage pathway; UMP from uracil: step 1/1. With respect to regulation, allosterically activated by GTP. Its function is as follows. Catalyzes the conversion of uracil and 5-phospho-alpha-D-ribose 1-diphosphate (PRPP) to UMP and diphosphate. In Dictyoglomus turgidum (strain DSM 6724 / Z-1310), this protein is Uracil phosphoribosyltransferase.